A 539-amino-acid polypeptide reads, in one-letter code: Capsid protein VP1 (539 aa).

The segment at 1 to 221 (MKMASNDANP…FIFLVPPTVE (221 aa)) is shell domain. The segment at 222–274 (SRTKPFTVPVLTVEEMSNSRFPIPLEKLYTGPSSAFVVQPQNGRCTTDGVLLG) is P1 sub-domain 1. Residues 222–539 (SRTKPFTVPV…GNGTGRRRAL (318 aa)) form a protruding domain region. The P2 sub-domain stretch occupies residues 275–417 (TTQLSAVNIC…SGRTGHNVHL (143 aa)). Residues 418 to 539 (APAVAPTFPG…GNGTGRRRAL (122 aa)) are P1 sub-domain 2.

It belongs to the caliciviridae capsid protein family. In terms of assembly, homodimer. Homomultimer. Interacts with the minor capsid protein VP2. Interacts (via C-terminus) with host type I histo-blood group structures antigens at the surface of target cells. In terms of processing, may be cleaved by host protease to generate soluble capsid protein. Assembled capsid cannot be cleaved.

It is found in the virion. It localises to the host cytoplasm. Functionally, capsid protein self assembles to form an icosahedral capsid with a T=3 symmetry, about 38 nm in diameter, and consisting of 180 capsid proteins. A smaller form of capsid with a diameter of 23 nm might be capsid proteins assembled as icosahedron with T=1 symmetry. The capsid encapsulates the genomic RNA and is decorated with VP2 proteins. Attaches virion to target cells by binding histo-blood group antigens (HBGAs) present on gastroduodenal epithelial cells. The soluble capsid protein may play a role in viral immunoevasion. The sequence is that of Capsid protein VP1 from Homo sapiens (Human).